The following is a 447-amino-acid chain: Multicopper oxidase mco (447 aa).

Residues 1–25 (MMDMKENDQKRNDMMDMKSHDERKN) show a composition bias toward basic and acidic residues. A disordered region spans residues 1 to 43 (MMDMKENDQKRNDMMDMKSHDERKNLNSSQGKNEITFPKVLDP). Cu cation is bound by residues His107, His109, His147, His149, His375, His378, His380, His428, Cys429, His430, His434, and Met439.

The protein belongs to the multicopper oxidase family. Requires Cu cation as cofactor.

The protein resides in the cytoplasm. Its function is as follows. May be involved in copper homeostasis and oxidative stress response. Oxidizes the substrate 3,3'-dimethoxybenzidine in vitro. Also possesses low levels of phenoloxidase and ferroxidase activities. The polypeptide is Multicopper oxidase mco (mco) (Staphylococcus aureus).